Reading from the N-terminus, the 911-residue chain is DNA mismatch repair protein MutS (911 aa).

The tract at residues 1 to 95 is disordered; sequence MALQGNLFGD…PWSHHSQVTP (95 aa). Basic and acidic residues predominate over residues 23 to 42; the sequence is KRQDEPDQLDDHELTQDAKQ. 727-734 serves as a coordination point for ATP; that stretch reads GPNASGKS.

The protein belongs to the DNA mismatch repair MutS family.

In terms of biological role, this protein is involved in the repair of mismatches in DNA. It is possible that it carries out the mismatch recognition step. This protein has a weak ATPase activity. This Synechococcus sp. (strain CC9311) protein is DNA mismatch repair protein MutS.